The chain runs to 329 residues: GTP 3',8-cyclase (329 aa).

The region spanning 8-234 is the Radical SAM core domain; it reads AFARKFYYLR…QLRQRSDGPA (227 aa). Arg17 provides a ligand contact to GTP. [4Fe-4S] cluster is bound by residues Cys24 and Cys28. Tyr30 contributes to the S-adenosyl-L-methionine binding site. Cys31 is a [4Fe-4S] cluster binding site. Arg68 contacts GTP. Gly72 contributes to the S-adenosyl-L-methionine binding site. A GTP-binding site is contributed by Thr99. Position 123 (Ser123) interacts with S-adenosyl-L-methionine. Position 160 (Lys160) interacts with GTP. S-adenosyl-L-methionine is bound at residue Met194. Residues Cys257 and Cys260 each contribute to the [4Fe-4S] cluster site. Residue 262-264 participates in GTP binding; that stretch reads RLR. Position 274 (Cys274) interacts with [4Fe-4S] cluster.

It belongs to the radical SAM superfamily. MoaA family. In terms of assembly, monomer and homodimer. [4Fe-4S] cluster serves as cofactor.

It carries out the reaction GTP + AH2 + S-adenosyl-L-methionine = (8S)-3',8-cyclo-7,8-dihydroguanosine 5'-triphosphate + 5'-deoxyadenosine + L-methionine + A + H(+). The protein operates within cofactor biosynthesis; molybdopterin biosynthesis. Functionally, catalyzes the cyclization of GTP to (8S)-3',8-cyclo-7,8-dihydroguanosine 5'-triphosphate. The chain is GTP 3',8-cyclase from Escherichia coli O45:K1 (strain S88 / ExPEC).